Consider the following 229-residue polypeptide: Potassium/proton antiporter CemA (229 aa).

4 helical membrane-spanning segments follow: residues 7–27, 106–126, 154–174, and 189–209; these read FIPF…YLSF, MILH…YSIL, ILLV…ELLI, and IISS…KYWI.

The protein belongs to the CemA family.

It is found in the plastid. The protein resides in the chloroplast inner membrane. It catalyses the reaction K(+)(in) + H(+)(out) = K(+)(out) + H(+)(in). Its function is as follows. Contributes to K(+)/H(+) antiport activity by supporting proton efflux to control proton extrusion and homeostasis in chloroplasts in a light-dependent manner to modulate photosynthesis. Prevents excessive induction of non-photochemical quenching (NPQ) under continuous-light conditions. Indirectly promotes efficient inorganic carbon uptake into chloroplasts. The protein is Potassium/proton antiporter CemA of Spinacia oleracea (Spinach).